We begin with the raw amino-acid sequence, 66 residues long: Probable cytochrome b-c1 complex subunit 9 (66 aa).

At 1 to 20 (MSNALTNIFYKYVARRNSTW) the chain is on the mitochondrial matrix side. The chain crosses the membrane as a helical span at residues 21–46 (MAGAILGAFVLDSTVSGAVNTFFDSV). Topologically, residues 47 to 66 (NKGKLWKDVYAERVKKGISQ) are mitochondrial intermembrane.

The protein belongs to the UQCR10/QCR9 family. In terms of assembly, component of the ubiquinol-cytochrome c oxidoreductase (cytochrome b-c1 complex, complex III, CIII), a multisubunit enzyme composed of 3 respiratory subunits cytochrome b, cytochrome c1 and Rieske protein, 2 core protein subunits, and additional low-molecular weight protein subunits. The complex exists as an obligatory dimer and forms supercomplexes (SCs) in the inner mitochondrial membrane with cytochrome c oxidase (complex IV, CIV).

Its subcellular location is the mitochondrion inner membrane. Component of the ubiquinol-cytochrome c oxidoreductase, a multisubunit transmembrane complex that is part of the mitochondrial electron transport chain which drives oxidative phosphorylation. The respiratory chain contains 3 multisubunit complexes succinate dehydrogenase (complex II, CII), ubiquinol-cytochrome c oxidoreductase (cytochrome b-c1 complex, complex III, CIII) and cytochrome c oxidase (complex IV, CIV), that cooperate to transfer electrons derived from NADH and succinate to molecular oxygen, creating an electrochemical gradient over the inner membrane that drives transmembrane transport and the ATP synthase. The cytochrome b-c1 complex catalyzes electron transfer from ubiquinol to cytochrome c, linking this redox reaction to translocation of protons across the mitochondrial inner membrane, with protons being carried across the membrane as hydrogens on the quinol. In the process called Q cycle, 2 protons are consumed from the matrix, 4 protons are released into the intermembrane space and 2 electrons are passed to cytochrome c. The polypeptide is Probable cytochrome b-c1 complex subunit 9 (Dictyostelium discoideum (Social amoeba)).